Consider the following 720-residue polypeptide: Methionine--tRNA ligase (720 aa).

The 'HIGH' region motif lies at 27–37; the sequence is PYANGQIHIGH. 4 residues coordinate Zn(2+): cysteine 158, cysteine 161, cysteine 171, and cysteine 174. Residues 348–352 carry the 'KMSKS' region motif; that stretch reads KMSKS. ATP is bound at residue lysine 351. Residues 614–720 enclose the tRNA-binding domain; the sequence is DFAKVDLRIA…SGAKPGMRVK (107 aa).

The protein belongs to the class-I aminoacyl-tRNA synthetase family. MetG type 1 subfamily. In terms of assembly, homodimer. Zn(2+) is required as a cofactor.

Its subcellular location is the cytoplasm. It catalyses the reaction tRNA(Met) + L-methionine + ATP = L-methionyl-tRNA(Met) + AMP + diphosphate. In terms of biological role, is required not only for elongation of protein synthesis but also for the initiation of all mRNA translation through initiator tRNA(fMet) aminoacylation. This chain is Methionine--tRNA ligase, found in Burkholderia ambifaria (strain ATCC BAA-244 / DSM 16087 / CCUG 44356 / LMG 19182 / AMMD) (Burkholderia cepacia (strain AMMD)).